Reading from the N-terminus, the 120-residue chain is Large ribosomal subunit protein bL19 (120 aa).

Belongs to the bacterial ribosomal protein bL19 family.

This protein is located at the 30S-50S ribosomal subunit interface and may play a role in the structure and function of the aminoacyl-tRNA binding site. The chain is Large ribosomal subunit protein bL19 from Gloeothece citriformis (strain PCC 7424) (Cyanothece sp. (strain PCC 7424)).